Consider the following 129-residue polypeptide: Small ribosomal subunit protein eS6 (129 aa).

Positions 106–129 (QINASIVSRGEQSIDDLLGGEDDE) are disordered.

The protein belongs to the eukaryotic ribosomal protein eS6 family.

This is Small ribosomal subunit protein eS6 from Natronomonas pharaonis (strain ATCC 35678 / DSM 2160 / CIP 103997 / JCM 8858 / NBRC 14720 / NCIMB 2260 / Gabara) (Halobacterium pharaonis).